The sequence spans 270 residues: Pancreas transcription factor 1 subunit alpha (270 aa).

The bHLH domain occupies 119-171 (QLRQAANVRERRRMQSINDAFEGLRSHIPTLPYEKRLSKVDTLRLAIGYINFL).

The protein resides in the nucleus. In terms of biological role, transcription factor implicated in the cell fate determination in various organs. Binds to the E-box consensus sequence 5'-CANNTG-3'. Acts together with pdx1 to induce the pancreatic lineage within the endoderm. Plays a central role in directing the differentiation of retinal progenitors towards horizontal and amacrine fates. The sequence is that of Pancreas transcription factor 1 subunit alpha (ptf1a) from Xenopus laevis (African clawed frog).